The following is a 542-amino-acid chain: MAKDIKFSADARSSMVRGVDILADTVKVTLGPKGRNVVLEKSFGSPLITNDGVTIAKEIELEDHFENMGAKLVSEVASKTNDIAGDGTTTATVLTQAIVREGLKNVTAGANPIGIRRGIETAVATAVDELKAIAQPVSGKEAIAQVAAVSSRSEKVGEYVSEAMEKVGNDGVITIEESRGMETELDVVEGMQFDRGYLSQYMVTDNEKMVADLENPYLLITDKKISNIQDVLPLLEEVLKTNRPLLIIADDVDGEALPTLVLNKIRGTFNVVAVKAPGFGDRRKAMLEDIAVLTGGTVITEDLGLELKDTTIDALGQAARVTVDKDSTVIVEGSGGKEAVANRVNLIKSQIETATSDFDREKLQERLAKLSGGVAVIKVGAATETELKEMKLRIEDALNATRAAVEEGIVAGGGTALINVIEKVAALDLTDDAATGRNLVLRALEEPVRQIAKNAGYEGSVIIDKLKNSSAGTGFNAANGEWVDMIDAGIIDPVKVTRSALQNAASVASLILTTEAVVADHPAPEAPAAAPAMDPSMMGGMM.

ATP contacts are provided by residues 29 to 32, 86 to 90, Gly413, 476 to 478, and Asp492; these read TLGP, DGTTT, and NAA.

Belongs to the chaperonin (HSP60) family. Forms a cylinder of 14 subunits composed of two heptameric rings stacked back-to-back. Interacts with the co-chaperonin GroES.

Its subcellular location is the cytoplasm. It catalyses the reaction ATP + H2O + a folded polypeptide = ADP + phosphate + an unfolded polypeptide.. Its function is as follows. Together with its co-chaperonin GroES, plays an essential role in assisting protein folding. The GroEL-GroES system forms a nano-cage that allows encapsulation of the non-native substrate proteins and provides a physical environment optimized to promote and accelerate protein folding. This Streptococcus mutans serotype c (strain ATCC 700610 / UA159) protein is Chaperonin GroEL.